The following is a 1033-amino-acid chain: NACHT, LRR and PYD domains-containing protein 11 (1033 aa).

Residues 1-91 form the Pyrin domain; sequence MAESDSTDFD…CRKIIGRRNR (91 aa). An NACHT domain is found at 147–470; that stretch reads LNVFLMGERA…AFLMAVPNYL (324 aa). 153 to 160 is a binding site for ATP; it reads GERASGKT. LRR repeat units follow at residues 588-611, 632-655, 745-768, 802-827, 859-882, and 919-944; these read CCHL…LIRP, MESL…ILSK, GGSL…ILCD, SPTL…TFPL, NEKL…LLCG, and LERL…LISP.

This sequence belongs to the NLRP family.

Involved in inflammation. This Homo sapiens (Human) protein is NACHT, LRR and PYD domains-containing protein 11 (NLRP11).